Consider the following 705-residue polypeptide: Crooked neck-like protein 1 (705 aa).

14 HAT repeats span residues 55 to 87, 89 to 121, 123 to 155, 157 to 188, 190 to 221, 223 to 258, 260 to 294, 304 to 336, 338 to 372, 382 to 418, 420 to 451, 453 to 485, 487 to 521, and 523 to 554; these read DYRL…WEES, KDLT…MEMK, KNIN…MEDM, GNYP…FEQR, KLFE…FEER, GNIE…FEEK, KEIE…FEKQ, VVLG…MEEI, GEIE…LWIN, KDME…FEIR, LNLD…LEIE, GNFD…LETE, GETV…SEIQ, and KQFD…FVHS. A disordered region spans residues 559–591; that stretch reads QQQKQRQQQQEEDGDSNTTKKDGGDDDNNDDIN. One copy of the HAT 15 repeat lies at 597–629; the sequence is IFIEAHKSLSNSDKEERLLLLESWKEFEQTFGN.

Belongs to the crooked-neck family. Identified in the spliceosome C complex.

It is found in the nucleus. Its subcellular location is the nucleus speckle. Involved in pre-mRNA splicing process. This is Crooked neck-like protein 1 (crnkl1) from Dictyostelium discoideum (Social amoeba).